The chain runs to 999 residues: Desmoglein-3 (999 aa).

Residues 1 to 23 form the signal peptide; it reads MMGLFPRTTGALAIFVVVILVHG. The propeptide occupies 24-49; that stretch reads ELRIETKGQYDEEEMTMQQAKRRQKR. 4 Cadherin domains span residues 50–158, 159–268, 269–383, and 386–499; these read EWVK…PVFS, QQIF…PMFR, DSQY…GIAF, and ASKT…VLEK. The Extracellular portion of the chain corresponds to 50–615; sequence EWVKFAKPCR…TRYGRPHSGR (566 aa). N-linked (GlcNAc...) asparagine glycans are attached at residues Asn110 and Asn180. N-linked (GlcNAc...) asparagine glycosylation is found at Asn459 and Asn545. The helical transmembrane segment at 616–640 threads the bilayer; the sequence is LGPAAIGLLLLGLLLLLLAPLLLLT. At 641–999 the chain is on the cytoplasmic side; that stretch reads CDCGAGSTGG…CTEDPCSRLI (359 aa). Residues 642-714 are required for interaction with CTNND1 and localization at cell-cell junctions; the sequence is DCGAGSTGGV…NTYARGTAVE (73 aa). Desmoglein repeat repeat units follow at residues 910–935 and 936–966; these read LSTS…LVTE and TYSA…ERVI.

As to quaternary structure, homodimer. Part of a complex that contains DSG3, PKP1, YAP1 and YWHAG; the complex is required for localization of DSG3 and YAP1 to the cell membrane in keratinocytes. Interacts with PKP2. Interacts with CTNND1; the interaction facilitates DSG3 localization and retention at cell-cell junctions. Interacts with CDH1; the interaction is required for CDH1 localization to developing adherens junctions. Interacts with RAC1; the interaction is required for DSG3 translocation to cell-cell junctions, organization of cortical F-actin bundles and actin anchoring at cell-cell junctions. Interacts with DSC3; the interaction may limit the interaction of DSC3 with p38MAPK family members and therefore repress p38MAPK signaling activation. In terms of tissue distribution, expressed throughout the basal and spinous layer of the epidermis with weak expression in the granular layer (at protein level). Expressed in skin and mucosa (at protein level). Expressed in the basal layer of the outer root sheath of the telogen hair club, specifically at the cell membrane between the apex of the cells and the surrounding hair club (at protein level). Expression is less abundant between the lateral margins of the outer root sheath basal cells (at protein level). Also expressed in the tongue, tonsil and esophagus.

The protein localises to the cell membrane. It is found in the cell junction. It localises to the desmosome. The protein resides in the cytoplasm. Its subcellular location is the tight junction. Its function is as follows. A component of desmosome cell-cell junctions which are required for positive regulation of cellular adhesion. Required for adherens and desmosome junction assembly in response to mechanical force in keratinocytes. Required for desmosome-mediated cell-cell adhesion of cells surrounding the telogen hair club and the basal layer of the outer root sheath epithelium, consequently is essential for the anchoring of telogen hairs in the hair follicle. Required for the maintenance of the epithelial barrier via promoting desmosome-mediated intercellular attachment of suprabasal epithelium to basal cells. May play a role in the protein stability of the desmosome plaque components DSP, JUP, PKP1, PKP2 and PKP3. Required for YAP1 localization at the plasma membrane in keratinocytes in response to mechanical strain, via the formation of an interaction complex composed of DSG3, PKP1 and YWHAG. May also be involved in the positive regulation of YAP1 target gene transcription and as a result cell proliferation. Positively regulates cellular contractility and cell junction formation via organization of cortical F-actin bundles and anchoring of actin to tight junctions, in conjunction with RAC1. The cytoplasmic pool of DSG3 is required for the localization of CDH1 and CTNNB1 at developing adherens junctions, potentially via modulation of SRC activity. Inhibits keratinocyte migration via suppression of p38MAPK signaling, may therefore play a role in moderating wound healing. This is Desmoglein-3 from Homo sapiens (Human).